The sequence spans 351 residues: Methylthioribose-1-phosphate isomerase (351 aa).

Substrate-binding positions include 51 to 53 (RGA), R94, and Q199. The active-site Proton donor is the D240. 250-251 (NK) provides a ligand contact to substrate.

This sequence belongs to the eIF-2B alpha/beta/delta subunits family. MtnA subfamily. As to quaternary structure, homodimer.

It catalyses the reaction 5-(methylsulfanyl)-alpha-D-ribose 1-phosphate = 5-(methylsulfanyl)-D-ribulose 1-phosphate. It participates in amino-acid biosynthesis; L-methionine biosynthesis via salvage pathway; L-methionine from S-methyl-5-thio-alpha-D-ribose 1-phosphate: step 1/6. Catalyzes the interconversion of methylthioribose-1-phosphate (MTR-1-P) into methylthioribulose-1-phosphate (MTRu-1-P). The chain is Methylthioribose-1-phosphate isomerase from Bacillus cereus (strain ATCC 10987 / NRS 248).